The chain runs to 262 residues: MTRKTLAIEGLTATTVIDGQQRVLVDNLSLGVQRGRILALVGASGSGKSMTCSAALGVLPPGVTASRGRVTIDGVPYAANALRGRHVATIMQNPRSAFNPVRTMRDHAIETLQALGKLSSNPQDQIVHCMRAAGLEDVKTILSLHPFEMSGGMLQRMMIALALLSEAPFLFADEPTTDLDLVVQLRVLELLEKLVEERDLGILLVTHDMGVVARLAHDVAVLDHGRLIEQAPVMDIFQTPGHEVTRMLVSAHLSLYGMELNA.

The 244-residue stretch at 6 to 249 folds into the ABC transporter domain; it reads LAIEGLTATT…PGHEVTRMLV (244 aa). 42-49 provides a ligand contact to ATP; that stretch reads GASGSGKS.

The protein belongs to the ABC transporter superfamily. Nickel importer (TC 3.A.1.5.3) family. The complex is composed of two ATP-binding proteins (NikD and NikE), two transmembrane proteins (NikB and NikC) and a solute-binding protein (NikA).

Its subcellular location is the cell inner membrane. It carries out the reaction Ni(2+)(out) + ATP + H2O = Ni(2+)(in) + ADP + phosphate + H(+). Functionally, part of the ABC transporter complex NikABCDE involved in nickel import. Responsible for energy coupling to the transport system. The sequence is that of Nickel import ATP-binding protein NikD from Brucella abortus biovar 1 (strain 9-941).